Consider the following 199-residue polypeptide: Recombination protein RecR (199 aa).

The C4-type zinc-finger motif lies at 57 to 72 (CPICGNITEKEVCDIC). The region spanning 80 to 176 (TTIMVVEQPK…KVTRLAAGLS (97 aa)) is the Toprim domain.

This sequence belongs to the RecR family.

In terms of biological role, may play a role in DNA repair. It seems to be involved in an RecBC-independent recombinational process of DNA repair. It may act with RecF and RecO. This is Recombination protein RecR from Lactobacillus helveticus (strain DPC 4571).